The sequence spans 152 residues: Large ribosomal subunit protein bL34c (152 aa).

Residues 1–91 (MATLSLLSTG…DRCRRFVVRA (91 aa)) constitute a chloroplast transit peptide.

As to quaternary structure, component of the chloroplast large ribosomal subunit (LSU). Mature 70S chloroplast ribosomes of higher plants consist of a small (30S) and a large (50S) subunit. The 30S small subunit contains 1 molecule of ribosomal RNA (16S rRNA) and 24 different proteins. The 50S large subunit contains 3 rRNA molecules (23S, 5S and 4.5S rRNA) and 33 different proteins.

The protein resides in the plastid. It localises to the chloroplast. Its function is as follows. Component of the chloroplast ribosome (chloro-ribosome), a dedicated translation machinery responsible for the synthesis of chloroplast genome-encoded proteins, including proteins of the transcription and translation machinery and components of the photosynthetic apparatus. The sequence is that of Large ribosomal subunit protein bL34c (RPL34) from Spinacia oleracea (Spinach).